Consider the following 441-residue polypeptide: uncharacterized protein (441 aa).

217–224 (GETGTGKT) serves as a coordination point for ATP.

It belongs to the GSP E family.

This is an uncharacterized protein from Bacillus anthracis.